The sequence spans 340 residues: tRNA N6-adenosine threonylcarbamoyltransferase (340 aa).

His111 and His115 together coordinate Fe cation. Residues 134–138 (LVSGG), Asp167, Gly180, and Asn276 contribute to the substrate site. Asp304 is a binding site for Fe cation.

The protein belongs to the KAE1 / TsaD family. Fe(2+) is required as a cofactor.

It is found in the cytoplasm. The catalysed reaction is L-threonylcarbamoyladenylate + adenosine(37) in tRNA = N(6)-L-threonylcarbamoyladenosine(37) in tRNA + AMP + H(+). Required for the formation of a threonylcarbamoyl group on adenosine at position 37 (t(6)A37) in tRNAs that read codons beginning with adenine. Is involved in the transfer of the threonylcarbamoyl moiety of threonylcarbamoyl-AMP (TC-AMP) to the N6 group of A37, together with TsaE and TsaB. TsaD likely plays a direct catalytic role in this reaction. The protein is tRNA N6-adenosine threonylcarbamoyltransferase of Helicobacter pylori (strain Shi470).